Here is a 319-residue protein sequence, read N- to C-terminus: HTH-type transcriptional regulator YidZ (319 aa).

Positions 8–65 constitute an HTH lysR-type domain; sequence LDLNLLLCLQLLMQERSVTKAAKRINVTPSAVSKSLAKLRAWFDDPLFVNSPLGLSPT. Residues 25-44 constitute a DNA-binding region (H-T-H motif); sequence VTKAAKRINVTPSAVSKSLA.

This sequence belongs to the LysR transcriptional regulatory family.

Functionally, involved in anaerobic NO protection. The protein is HTH-type transcriptional regulator YidZ of Escherichia coli (strain K12 / MC4100 / BW2952).